A 424-amino-acid polypeptide reads, in one-letter code: Protein TUNICAMYCIN INDUCED 1 (424 aa).

An N-terminal signal peptide occupies residues 1 to 25 (MGHRVLVYVGALFLILFTIFPSSSA). Residues Asn-197, Asn-296, and Asn-406 are each glycosylated (N-linked (GlcNAc...) asparagine).

Restricted to pollen grains at high levels.

The protein resides in the endoplasmic reticulum. In terms of biological role, involved in the regulation of pollen surface morphology, probably by modulating the secretion of proteins and/or lipids during pollen development. This chain is Protein TUNICAMYCIN INDUCED 1, found in Arabidopsis thaliana (Mouse-ear cress).